Consider the following 357-residue polypeptide: Heat-inducible transcription repressor HrcA (357 aa).

It belongs to the HrcA family.

Negative regulator of class I heat shock genes (grpE-dnaK-dnaJ and groELS operons). Prevents heat-shock induction of these operons. The chain is Heat-inducible transcription repressor HrcA from Ureaplasma parvum serovar 3 (strain ATCC 27815 / 27 / NCTC 11736).